The sequence spans 471 residues: Probable ribonuclease FAU-1 (471 aa).

This sequence belongs to the FAU-1 family.

Probable RNase involved in rRNA stability through maturation and/or degradation of precursor rRNAs. Binds to RNA in loop regions with AU-rich sequences. The chain is Probable ribonuclease FAU-1 from Aeropyrum pernix (strain ATCC 700893 / DSM 11879 / JCM 9820 / NBRC 100138 / K1).